The primary structure comprises 218 residues: Putative receptor like protein 25 (218 aa).

Residues 1–178 lie on the Extracellular side of the membrane; it reads MIYTKNAYGS…QEDAKVLNWK (178 aa). 4 LRR repeats span residues 34–58, 59–82, 83–106, and 108–131; these read LTLY…IGLL, KALI…MANL, IELE…LKTL, and FLGY…QITG. Asn-65 is a glycosylation site (N-linked (GlcNAc...) asparagine). Asn-113 carries an N-linked (GlcNAc...) asparagine glycan. Residues 179–199 traverse the membrane as a helical segment; that stretch reads AVATGYGPGVFFGLAIAQIIA. Residues 200-218 are Cytoplasmic-facing; sequence SYKPEWLVKIIGPNKRRNH.

It belongs to the RLP family.

The protein resides in the cell membrane. This Arabidopsis thaliana (Mouse-ear cress) protein is Putative receptor like protein 25.